We begin with the raw amino-acid sequence, 706 residues long: Catalase HPII (706 aa).

Active-site residues include H77 and N151. Y365 lines the heme pocket. The segment at 512–532 (EPPEEQVDESAPVSPALSQVT) is disordered.

The protein belongs to the catalase family. HPII subfamily. Heme serves as cofactor.

Its subcellular location is the cytoplasm. It catalyses the reaction 2 H2O2 = O2 + 2 H2O. Functionally, decomposes hydrogen peroxide into water and oxygen; serves to protect cells from the toxic effects of hydrogen peroxide. The sequence is that of Catalase HPII (katE) from Mycobacterium avium.